The following is a 478-amino-acid chain: Proline--tRNA ligase (478 aa).

This sequence belongs to the class-II aminoacyl-tRNA synthetase family. ProS type 3 subfamily. As to quaternary structure, homodimer.

Its subcellular location is the cytoplasm. The enzyme catalyses tRNA(Pro) + L-proline + ATP = L-prolyl-tRNA(Pro) + AMP + diphosphate. Catalyzes the attachment of proline to tRNA(Pro) in a two-step reaction: proline is first activated by ATP to form Pro-AMP and then transferred to the acceptor end of tRNA(Pro). The chain is Proline--tRNA ligase from Clostridium botulinum (strain ATCC 19397 / Type A).